Reading from the N-terminus, the 109-residue chain is Putative double-stranded DNA mimic protein Ent638_2296 (109 aa).

It belongs to the putative dsDNA mimic protein family.

In terms of biological role, may act as a double-stranded DNA (dsDNA) mimic. Probably regulates the activity of a dsDNA-binding protein. The protein is Putative double-stranded DNA mimic protein Ent638_2296 of Enterobacter sp. (strain 638).